The following is a 713-amino-acid chain: Polyribonucleotide nucleotidyltransferase (713 aa).

The Mg(2+) site is built by aspartate 485 and aspartate 491. In terms of domain architecture, KH spans 552 to 611 (PRIYTMKIDPKKIKDVIGKGGATVRSLTEETGTSIDIDDDGTVKIAAVDKNAVQEVMSRI). Residues 621-689 (GVVYKGKVTR…RQGRIRLTMK (69 aa)) enclose the S1 motif domain. Residues 694–713 (DQTKNEENLLQSEEGSPVQE) form a disordered region. Positions 701–713 (NLLQSEEGSPVQE) are enriched in polar residues.

The protein belongs to the polyribonucleotide nucleotidyltransferase family. In terms of assembly, component of the RNA degradosome, which is a multiprotein complex involved in RNA processing and mRNA degradation. The cofactor is Mg(2+).

Its subcellular location is the cytoplasm. The catalysed reaction is RNA(n+1) + phosphate = RNA(n) + a ribonucleoside 5'-diphosphate. Its function is as follows. Involved in mRNA degradation. Catalyzes the phosphorolysis of single-stranded polyribonucleotides processively in the 3'- to 5'-direction. In Histophilus somni (strain 2336) (Haemophilus somnus), this protein is Polyribonucleotide nucleotidyltransferase.